Here is a 261-residue protein sequence, read N- to C-terminus: 3-hydroxyacyl-CoA dehydrogenase type-2 (261 aa).

Alanine 2 is subject to N-acetylalanine. NAD(+) contacts are provided by serine 20, leucine 22, and aspartate 41. Lysine 53 is subject to N6-acetyllysine; alternate. Lysine 53 is subject to N6-succinyllysine; alternate. Position 65 (valine 65) interacts with NAD(+). N6-acetyllysine is present on lysine 69. Residue cysteine 91 coordinates NAD(+). Residues lysine 99 and lysine 105 each carry the N6-acetyllysine modification. Residue serine 155 coordinates substrate. The NAD(+) site is built by tyrosine 168, lysine 172, phenylalanine 201, and threonine 203. Residue tyrosine 168 is the Proton acceptor of the active site. Lysine 212 is modified (N6-acetyllysine; alternate). An N6-succinyllysine; alternate modification is found at lysine 212.

This sequence belongs to the short-chain dehydrogenases/reductases (SDR) family. Homotetramer. Component of mitochondrial ribonuclease P, a complex composed of TRMT10C/MRPP1, HSD17B10/MRPP2 and PRORP/MRPP3. Interacts with TRMT10C/MRPP1; forming the MRPP1-MRPP2 subcomplex of the mitochondrial ribonuclease P complex.

The protein localises to the mitochondrion. Its subcellular location is the mitochondrion matrix. It is found in the mitochondrion nucleoid. It catalyses the reaction a (3S)-3-hydroxyacyl-CoA + NAD(+) = a 3-oxoacyl-CoA + NADH + H(+). The catalysed reaction is (2S,3S)-3-hydroxy-2-methylbutanoyl-CoA + NAD(+) = 2-methyl-3-oxobutanoyl-CoA + NADH + H(+). It carries out the reaction testosterone + NAD(+) = androst-4-ene-3,17-dione + NADH + H(+). The enzyme catalyses 5alpha-androstane-3alpha,17beta-diol + NAD(+) = 17beta-hydroxy-5alpha-androstan-3-one + NADH + H(+). It catalyses the reaction 17beta-estradiol + NAD(+) = estrone + NADH + H(+). The catalysed reaction is cholate + NAD(+) = 3alpha,12alpha-dihydroxy-7-oxo-5beta-cholanate + NADH + H(+). It carries out the reaction (3S)-3-hydroxybutanoyl-CoA + NAD(+) = acetoacetyl-CoA + NADH + H(+). The enzyme catalyses (3S)-hydroxyoctanoyl-CoA + NAD(+) = 3-oxooctanoyl-CoA + NADH + H(+). It catalyses the reaction (3S)-hydroxyhexadecanoyl-CoA + NAD(+) = 3-oxohexadecanoyl-CoA + NADH + H(+). The catalysed reaction is 17beta-hydroxy-5alpha-androstan-3-one + NAD(+) = 5alpha-androstan-3,17-dione + NADH + H(+). It carries out the reaction 5alpha-pregnan-20beta-ol-3-one + NAD(+) = 5alpha-pregnane-3,20-dione + NADH + H(+). The enzyme catalyses 3alpha-hydroxy-5alpha-pregnan-20-one + NAD(+) = 5alpha-pregnane-3,20-dione + NADH + H(+). It catalyses the reaction cortisone + NAD(+) = 17alpha-hydroxypregn-4-en-3,11,20-trione-21-al + NADH + H(+). The catalysed reaction is 11-dehydrocorticosterone + NAD(+) = pregn-4-ene-3,11,20,21-tetraone + NADH + H(+). It carries out the reaction cortisol + NAD(+) = 11beta,17alpha-dihydroxypregn-4-ene-3,20,21-trione + NADH + H(+). The enzyme catalyses chenodeoxycholate + NAD(+) = 7-oxolithocholate + NADH + H(+). It catalyses the reaction ursodeoxycholate + NAD(+) = 7-oxolithocholate + NADH + H(+). The catalysed reaction is 3beta,7beta-dihydroxy-5beta-cholan-24-oate + NAD(+) = 3beta-hydroxy-7-oxo-5beta-cholan-24-oate + NADH + H(+). Its pathway is amino-acid degradation; L-isoleucine degradation. It participates in lipid metabolism; fatty acid beta-oxidation. It functions in the pathway steroid metabolism. The protein operates within lipid metabolism; bile acid biosynthesis. Mitochondrial dehydrogenase involved in pathways of fatty acid, branched-chain amino acid and steroid metabolism. Acts as (S)-3-hydroxyacyl-CoA dehydrogenase in mitochondrial fatty acid beta-oxidation, a major degradation pathway of fatty acids. Catalyzes the third step in the beta-oxidation cycle, namely the reversible conversion of (S)-3-hydroxyacyl-CoA to 3-ketoacyl-CoA. Preferentially accepts straight medium- and short-chain acyl-CoA substrates with highest efficiency for (3S)-hydroxybutanoyl-CoA. Acts as 3-hydroxy-2-methylbutyryl-CoA dehydrogenase in branched-chain amino acid catabolic pathway. Catalyzes the oxidation of 3-hydroxy-2-methylbutanoyl-CoA into 2-methyl-3-oxobutanoyl-CoA, a step in isoleucine degradation pathway. Has hydroxysteroid dehydrogenase activity toward steroid hormones and bile acids. Catalyzes the oxidation of 3alpha-, 17beta-, 20beta- and 21-hydroxysteroids and 7alpha- and 7beta-hydroxy bile acids. Oxidizes allopregnanolone/brexanolone at the 3alpha-hydroxyl group, which is known to be critical for the activation of gamma-aminobutyric acid receptors (GABAARs) chloride channel. Has phospholipase C-like activity toward cardiolipin and its oxidized species. Likely oxidizes the 2'-hydroxyl in the head group of cardiolipin to form a ketone intermediate that undergoes nucleophilic attack by water and fragments into diacylglycerol, dihydroxyacetone and orthophosphate. Has higher affinity for cardiolipin with oxidized fatty acids and may degrade these species during the oxidative stress response to protect cells from apoptosis. By interacting with intracellular amyloid-beta, it may contribute to the neuronal dysfunction associated with Alzheimer disease (AD). Essential for structural and functional integrity of mitochondria. In terms of biological role, in addition to mitochondrial dehydrogenase activity, moonlights as a component of mitochondrial ribonuclease P, a complex that cleaves tRNA molecules in their 5'-ends. Together with TRMT10C/MRPP1, forms a subcomplex of the mitochondrial ribonuclease P, named MRPP1-MRPP2 subcomplex, which displays functions that are independent of the ribonuclease P activity. The MRPP1-MRPP2 subcomplex catalyzes the formation of N(1)-methylguanine and N(1)-methyladenine at position 9 (m1G9 and m1A9, respectively) in tRNAs; HSD17B10/MRPP2 acting as a non-catalytic subunit. The MRPP1-MRPP2 subcomplex also acts as a tRNA maturation platform: following 5'-end cleavage by the mitochondrial ribonuclease P complex, the MRPP1-MRPP2 subcomplex enhances the efficiency of 3'-processing catalyzed by ELAC2, retains the tRNA product after ELAC2 processing and presents the nascent tRNA to the mitochondrial CCA tRNA nucleotidyltransferase TRNT1 enzyme. Associates with mitochondrial DNA complexes at the nucleoids to initiate RNA processing and ribosome assembly. This chain is 3-hydroxyacyl-CoA dehydrogenase type-2 (Hsd17b10), found in Rattus norvegicus (Rat).